Here is a 208-residue protein sequence, read N- to C-terminus: Outer-membrane lipoprotein carrier protein (208 aa).

Positions 1–22 (MKKRLCAVLLASPLLFSAAVFA) are cleaved as a signal peptide.

The protein belongs to the LolA family. In terms of assembly, monomer.

It is found in the periplasm. Its function is as follows. Participates in the translocation of lipoproteins from the inner membrane to the outer membrane. Only forms a complex with a lipoprotein if the residue after the N-terminal Cys is not an aspartate (The Asp acts as a targeting signal to indicate that the lipoprotein should stay in the inner membrane). The sequence is that of Outer-membrane lipoprotein carrier protein from Shewanella baltica (strain OS223).